A 77-amino-acid polypeptide reads, in one-letter code: Acyl carrier protein (77 aa).

Positions 2-77 constitute a Carrier domain; the sequence is SDVADRVKKI…DAVKFISEAS (76 aa). An O-(pantetheine 4'-phosphoryl)serine modification is found at Ser-37.

Belongs to the acyl carrier protein (ACP) family. Post-translationally, 4'-phosphopantetheine is transferred from CoA to a specific serine of apo-ACP by AcpS. This modification is essential for activity because fatty acids are bound in thioester linkage to the sulfhydryl of the prosthetic group.

It localises to the cytoplasm. It functions in the pathway lipid metabolism; fatty acid biosynthesis. Carrier of the growing fatty acid chain in fatty acid biosynthesis. In Ruegeria pomeroyi (strain ATCC 700808 / DSM 15171 / DSS-3) (Silicibacter pomeroyi), this protein is Acyl carrier protein.